Here is a 357-residue protein sequence, read N- to C-terminus: DnaJ homolog subfamily C member 25 (357 aa).

A helical membrane pass occupies residues 19–39 (WLLLAPLLLVPLLARPAEALV). Residues 48 to 121 (DCYEVLGVSR…ETRKDYDYML (74 aa)) enclose the J domain. 2 consecutive transmembrane segments (helical) span residues 147–167 (VVIL…WWNS) and 241–261 (LLLF…AWYC).

Belongs to the DNAJC25 family.

The protein localises to the membrane. In Mus musculus (Mouse), this protein is DnaJ homolog subfamily C member 25 (Dnajc25).